The following is a 393-amino-acid chain: Dual specificity mitogen-activated protein kinase kinase 1 (393 aa).

Residues methionine 1–glutamate 27 form a disordered region. In terms of domain architecture, Protein kinase spans phenylalanine 68–isoleucine 361. Residues leucine 74 to valine 82, lysine 97, methionine 143 to methionine 146, and serine 150 to glutamine 153 each bind ATP. Lysine 97 is a U0126 binding site. K-252a is bound at residue glutamate 144 to methionine 146. Aspartate 190 (proton acceptor) is an active-site residue. ATP contacts are provided by residues lysine 192–asparagine 195 and aspartate 208. Serine 194 is a K-252a binding site. Aspartate 208 to valine 211 serves as a coordination point for U0126. Phosphoserine; by BRAF and RAF1 occurs at positions 218 and 222. Residues glutamate 270–proline 307 form an RAF1-binding region. Threonine 286 is subject to Phosphothreonine. Threonine 292 carries the phosphothreonine; by MAPK1 modification. Serine 298 bears the Phosphoserine; by PAK mark.

The protein belongs to the protein kinase superfamily. STE Ser/Thr protein kinase family. MAP kinase kinase subfamily. Found in a complex with at least BRAF, HRAS, MAP2K1, MAPK3/ERK1 and RGS14. Forms a heterodimer with MAP2K2/MEK2. Forms heterodimers with KSR2 which further dimerize to form tetramers. Interacts with KSR1 or KSR2 and BRAF; the interaction with KSR1 or KSR2 mediates KSR1-BRAF or KSR2-BRAF dimerization. Interacts with ARBB2, LAMTOR3 and RAF1. Interacts with MAPK1/ERK2. Interacts with MORG1. Interacts with PPARG. Interacts with isoform 1 of VRK2. Interacts with SGK1. Interacts with BIRC6/bruce. Interacts with KAT7; the interaction promotes KAT7 phosphorylation. Interacts with RAF1 and NEK10; the interaction is required for ERK1/2-signaling pathway activation in response to UV irradiation. Interacts with TRAF3IP3. Interacts with MOS. In terms of assembly, (Microbial infection) Interacts with Yersinia YopJ. In terms of processing, phosphorylation at Ser-218 and Ser-222 by MAP kinase kinase kinases (BRAF or MEKK1) positively regulates kinase activity. Also phosphorylated at Thr-292 by MAPK1/ERK2 and at Ser-298 by PAK. MAPK1/ERK2 phosphorylation of Thr-292 occurs in response to cellular adhesion and leads to inhibition of Ser-298 phosphorylation by PAK. Autophosphorylated at Ser-218 and Ser-222, autophosphosphorylation is promoted by NEK10 following UV irradiation. Post-translationally, (Microbial infection) Acetylation by Yersinia YopJ prevents phosphorylation and activation, thus blocking the MAPK signaling pathway. In terms of tissue distribution, widely expressed, with extremely low levels in brain.

The protein resides in the cytoplasm. Its subcellular location is the cytoskeleton. The protein localises to the microtubule organizing center. It localises to the centrosome. It is found in the spindle pole body. The protein resides in the nucleus. Its subcellular location is the membrane. The catalysed reaction is L-seryl-[protein] + ATP = O-phospho-L-seryl-[protein] + ADP + H(+). It carries out the reaction L-threonyl-[protein] + ATP = O-phospho-L-threonyl-[protein] + ADP + H(+). It catalyses the reaction L-tyrosyl-[protein] + ATP = O-phospho-L-tyrosyl-[protein] + ADP + H(+). With respect to regulation, ras proteins such as HRAS mediate the activation of RAF proteins such as RAF1 or BRAF which in turn activate extracellular signal-regulated kinases (ERK) through MAPK (mitogen-activated protein kinases) and ERK kinases MAP2K1/MEK1 and MAP2K2/MEK2. Activation occurs through phosphorylation of Ser-218 and Ser-222. MAP2K1/MEK1 binds KSR1 or KSR2 releasing the inhibitory intramolecular interaction between KSR1 or KSR2 protein kinase and N-terminal domains. This allows KSR1 or KSR2 dimerization with BRAF leading to BRAF activation and phosphorylation of MAP2K1. MAP2K1/MEK1 is also the target of negative feed-back regulation by its substrate kinases, such as MAPK1/ERK2. These phosphorylate MAP2K1/MEK1 on Thr-292, thereby facilitating dephosphorylation of the activating residues Ser-218 and Ser-222. Inhibited by serine/threonine phosphatase 2A. Many inhibitors have been identified including pyrrole derivatives, TAK-733 (one of a series of 8-methylpyrido[2,3-d]pyrimidine-4,7(3H,8H)-dione derivatives), CH4987655 and RDEA119/BAY 869766. Dual specificity protein kinase which acts as an essential component of the MAP kinase signal transduction pathway. Binding of extracellular ligands such as growth factors, cytokines and hormones to their cell-surface receptors activates RAS and this initiates RAF1 activation. RAF1 then further activates the dual-specificity protein kinases MAP2K1/MEK1 and MAP2K2/MEK2. Both MAP2K1/MEK1 and MAP2K2/MEK2 function specifically in the MAPK/ERK cascade, and catalyze the concomitant phosphorylation of a threonine and a tyrosine residue in a Thr-Glu-Tyr sequence located in the extracellular signal-regulated kinases MAPK3/ERK1 and MAPK1/ERK2, leading to their activation and further transduction of the signal within the MAPK/ERK cascade. Activates BRAF in a KSR1 or KSR2-dependent manner; by binding to KSR1 or KSR2 releases the inhibitory intramolecular interaction between KSR1 or KSR2 protein kinase and N-terminal domains which promotes KSR1 or KSR2-BRAF dimerization and BRAF activation. Depending on the cellular context, this pathway mediates diverse biological functions such as cell growth, adhesion, survival and differentiation, predominantly through the regulation of transcription, metabolism and cytoskeletal rearrangements. One target of the MAPK/ERK cascade is peroxisome proliferator-activated receptor gamma (PPARG), a nuclear receptor that promotes differentiation and apoptosis. MAP2K1/MEK1 has been shown to export PPARG from the nucleus. The MAPK/ERK cascade is also involved in the regulation of endosomal dynamics, including lysosome processing and endosome cycling through the perinuclear recycling compartment (PNRC), as well as in the fragmentation of the Golgi apparatus during mitosis. This is Dual specificity mitogen-activated protein kinase kinase 1 from Homo sapiens (Human).